Reading from the N-terminus, the 341-residue chain is MSVYTTAQLLAVNEKKFKFDPLFLRIFFRETYPFSTEKVYLSQIPGLVNMALYVSPIVSGKVIRSRGGSTSEFTPGYVKPKHEVNPLMMTLRLPDEDPQNVADPVYRRRRIILQNMKDEELAIAQVEEKQAVSAVLSGKYTMTGEAFEPVEVDMGRSAGNNIVQAGAAAWSTRDKETYDPTDDIEAYALNARGVVNIIVFDPKGWALFRSFKAVEKKLDTRRGSNSELETAVKDLGMAVSYKGMFGDVAIVVYSGQYVENDVKKNYLPDLTMVLGNTQARGLRTYGCILDADAQREGIDASTRYPKNWVQLGDPVREFTMIQSAPLMLLPDPDAFVSVKLA.

The stretch at 109-129 forms a coiled coil; the sequence is RRIILQNMKDEELAIAQVEEK.

The protein belongs to the lambda phage major capsid protein family. As to quaternary structure, homomultimer.

Its subcellular location is the virion. It localises to the host cytoplasm. Its function is as follows. Assembles to form an icosahedral capsid with a T=7 symmetry. The icosahedral capsid is about 60 nm in diameter and composed of 415 major capsid proteins. The assembly is primed by the interaction between capsid assembly protease and portal dodecamer, and major capsid proteins assemble cooperatively to form the procapsid with the help of capsid scaffolding protein. Major capsid protein forms hexons and pentons of the icosahedron. Viral genomic DNA is packaged into the procapsid through the portal vertex. The packaging triggers a dramatic reconfiguration of the capsid shell. The sequence is that of Major capsid protein (E) from Enterobacteria phage phi80 (Bacteriophage phi-80).